The following is a 703-amino-acid chain: Bifunctional arginine dihydrolase/ornithine cyclodeaminase AgrE (703 aa).

Positions 10 to 269 (CPPDHYDVDY…GAAKCLTLRV (260 aa)) are arginine dihydrolase. L-arginine contacts are provided by Asn22, Asp65, Asn71, Arg90, and Arg139. Asn22 contacts L-ornithine. Arg90, Arg139, and His168 together coordinate L-ornithine. Catalysis depends on His168, which acts as the Proton donor/acceptor. Asp170 and Ala258 together coordinate L-arginine. Residue Cys264 coordinates L-ornithine. Cys264 acts as the Nucleophile in catalysis. Positions 285–694 (SRIIRIEGHL…SLLTQQLDKL (410 aa)) are ornithine cyclodeaminase. NAD(+) is bound by residues Asn524, Ala525, Asp603, Ser635, Met636, Leu637, His638, Asp656, Asp679, and Val680.

The protein in the N-terminal section; belongs to the DDAH family. This sequence in the C-terminal section; belongs to the AgrE/ArgZ ornithine cyclodeaminase family. As to quaternary structure, homotetramer. NAD(+) serves as cofactor.

It carries out the reaction L-arginine + 2 H2O + 2 H(+) = L-ornithine + 2 NH4(+) + CO2. The enzyme catalyses L-ornithine = L-proline + NH4(+). With respect to regulation, ornithine cyclodeaminase activity is inhibited by ATP. Functionally, bifunctional enzyme involved in a cyanobacterial arginine utilization pathway that produces glutamate and enables cellular adaptation to nitrogen fluctuations. Catalyzes the hydrolysis of arginine to ornithine, with the release of ammonia and carbon dioxide. Then, catalyzes the conversion of ornithine to proline, with the release of ammonia. This is Bifunctional arginine dihydrolase/ornithine cyclodeaminase AgrE from Nostoc sp. (strain PCC 7120 / SAG 25.82 / UTEX 2576).